The primary structure comprises 298 residues: UDP-N-acetylenolpyruvoylglucosamine reductase (298 aa).

Residues 26 to 191 form the FAD-binding PCMH-type domain; that stretch reads KTGGAADVFV…LDATFSLALE (166 aa). Arg170 is a catalytic residue. Residue Ser220 is the Proton donor of the active site. The active site involves Glu290.

This sequence belongs to the MurB family. FAD serves as cofactor.

It localises to the cytoplasm. The catalysed reaction is UDP-N-acetyl-alpha-D-muramate + NADP(+) = UDP-N-acetyl-3-O-(1-carboxyvinyl)-alpha-D-glucosamine + NADPH + H(+). Its pathway is cell wall biogenesis; peptidoglycan biosynthesis. Its function is as follows. Cell wall formation. This Listeria monocytogenes serotype 4b (strain CLIP80459) protein is UDP-N-acetylenolpyruvoylglucosamine reductase.